Consider the following 347-residue polypeptide: Protein N-terminal asparagine amidohydrolase (347 aa).

It catalyses the reaction N-terminal L-asparaginyl-[protein] + H2O + H(+) = N-terminal L-aspartyl-[protein] + NH4(+). N-terminal asparagine deamidase that mediates deamidation of N-terminal asparagine residues to aspartate. Required for the ubiquitin-dependent turnover of intracellular proteins that initiate with Met-Asn. These proteins are acetylated on the retained initiator methionine and can subsequently be modified by the removal of N-acetyl methionine by acylaminoacid hydrolase (AAH). Conversion of the resulting N-terminal asparagine to aspartate by NTAN1 renders the protein susceptible to arginylation, polyubiquitination and degradation as specified by the N-end rule. This enzyme does not act on substrates with internal or C-terminal asparagines and does not act on glutamine residues in any position. Does not seem to be involved in immune response, unlike the N-terminal glutamine amidohydrolase NTAQ1. In Arabidopsis thaliana (Mouse-ear cress), this protein is Protein N-terminal asparagine amidohydrolase.